Consider the following 299-residue polypeptide: ATP phosphoribosyltransferase (299 aa).

The protein belongs to the ATP phosphoribosyltransferase family. Long subfamily. It depends on Mg(2+) as a cofactor.

The protein localises to the cytoplasm. The catalysed reaction is 1-(5-phospho-beta-D-ribosyl)-ATP + diphosphate = 5-phospho-alpha-D-ribose 1-diphosphate + ATP. Its pathway is amino-acid biosynthesis; L-histidine biosynthesis; L-histidine from 5-phospho-alpha-D-ribose 1-diphosphate: step 1/9. Its activity is regulated as follows. Feedback inhibited by histidine. Its function is as follows. Catalyzes the condensation of ATP and 5-phosphoribose 1-diphosphate to form N'-(5'-phosphoribosyl)-ATP (PR-ATP). Has a crucial role in the pathway because the rate of histidine biosynthesis seems to be controlled primarily by regulation of HisG enzymatic activity. The protein is ATP phosphoribosyltransferase of Actinobacillus pleuropneumoniae serotype 7 (strain AP76).